A 492-amino-acid polypeptide reads, in one-letter code: Sestrin-1 (492 aa).

Residues 71 to 252 are N-terminal domain; may mediate the alkylhydroperoxide reductase activity; that stretch reads FADSFAALGR…ICDITNGNHS (182 aa). The active-site Cysteine sulfenic acid (-SOH) intermediate is C130. A phosphoserine mark is found at S293 and S314. The segment at 321 to 492 is C-terminal domain; mediates TORC1 regulation; it reads PARDVSRHFE…ALRAITRYMT (172 aa). L-leucine-binding positions include 386 to 389, T398, and E463; that span reads TYNT.

This sequence belongs to the sestrin family. In terms of assembly, interacts with the GATOR2 complex which is composed of MIOS, SEC13, SEH1L, WDR24 and WDR59; the interaction is negatively regulated by leucine. Interacts with RRAGA, RRAGB, RRAGC and RRAGD; may function as a guanine nucleotide dissociation inhibitor for RRAGs and regulate them. Interacts with KEAP1, RBX1 and SQSTM1; in the SQSTM1-dependent autophagic degradation of KEAP1. May interact with PRDX1.

It is found in the nucleus. Its subcellular location is the cytoplasm. The catalysed reaction is a hydroperoxide + L-cysteinyl-[protein] = S-hydroxy-L-cysteinyl-[protein] + an alcohol. In terms of biological role, functions as an intracellular leucine sensor that negatively regulates the TORC1 signaling pathway through the GATOR complex. In absence of leucine, binds the GATOR subcomplex GATOR2 and prevents TORC1 signaling. Binding of leucine to SESN2 disrupts its interaction with GATOR2 thereby activating the TORC1 signaling pathway. This stress-inducible metabolic regulator may also play a role in protection against oxidative and genotoxic stresses. May positively regulate the transcription by NFE2L2 of genes involved in the response to oxidative stress by facilitating the SQSTM1-mediated autophagic degradation of KEAP1. Moreover, may prevent the accumulation of reactive oxygen species (ROS) through the alkylhydroperoxide reductase activity born by the N-terminal domain of the protein. Was originally reported to contribute to oxidative stress resistance by reducing PRDX1. However, this could not be confirmed. This chain is Sestrin-1, found in Macaca fascicularis (Crab-eating macaque).